We begin with the raw amino-acid sequence, 176 residues long: ATP-dependent protease subunit HslV (176 aa).

T2 is a catalytic residue. The Na(+) site is built by G157, C160, and T163.

Belongs to the peptidase T1B family. HslV subfamily. A double ring-shaped homohexamer of HslV is capped on each side by a ring-shaped HslU homohexamer. The assembly of the HslU/HslV complex is dependent on binding of ATP.

The protein resides in the cytoplasm. The catalysed reaction is ATP-dependent cleavage of peptide bonds with broad specificity.. Its activity is regulated as follows. Allosterically activated by HslU binding. In terms of biological role, protease subunit of a proteasome-like degradation complex believed to be a general protein degrading machinery. The sequence is that of ATP-dependent protease subunit HslV from Erwinia tasmaniensis (strain DSM 17950 / CFBP 7177 / CIP 109463 / NCPPB 4357 / Et1/99).